The following is an 881-amino-acid chain: DNA replication helicase (881 aa).

A disordered region spans residues 1–32 (MESADILPGSRGTVDRRCEGSEEKITPPRPVE). The segment covering 13 to 32 (TVDRRCEGSEEKITPPRPVE) has biased composition (basic and acidic residues). Position 105 to 112 (105 to 112 (GNAGSGKS)) interacts with ATP.

The protein belongs to the herpesviridae helicase family. In terms of assembly, associates with the primase and the primase-associated factor to form the helicase-primase complex.

The protein resides in the host nucleus. Its function is as follows. Component of the helicase/primase complex. Unwinds the DNA at the replication forks and generates single-stranded DNA for both leading and lagging strand synthesis. The primase synthesizes short RNA primers on the lagging strand that the polymerase elongates using dNTPs. Possesses helicase-like motifs and therefore may act as the helicase subunit of the complex. This chain is DNA replication helicase, found in Equus caballus (Horse).